We begin with the raw amino-acid sequence, 1755 residues long: Transposon Ty1-PR1 Gag-Pol polyprotein (1755 aa).

Polar residues-rich tracts occupy residues 1–23 (MESQ…SVTS), 48–60 (TKAN…TPAS), 71–93 (SPQT…MMTQ), and 127–152 (QSQF…GNTF). Disordered stretches follow at residues 1–93 (MESQ…MMTQ), 126–173 (PQSQ…RPPP), and 352–421 (GSRN…SKST). Residues 153-165 (TDSSSADSDMTST) show a composition bias toward low complexity. Residues 299–401 (NNGIHINNKV…NSKSKTARAH (103 aa)) form an RNA-binding region. A compositionally biased stretch (low complexity) spans 402–418 (NVSTSNNSPSTDNDSIS). Phosphoserine is present on S416. Residue D461 is the For protease activity; shared with dimeric partner of the active site. The segment at 583 to 640 (NVHTSESTRKYPYPFIHRMLAHANAQTIRYSLKNNTITYFNESDVDWSSAIDYQCPDC) is integrase-type zinc finger-like. An Integrase catalytic domain is found at 660 to 835 (NSYEPFQYLH…AGLDISTLLP (176 aa)). Positions 671 and 736 each coordinate Mg(2+). 3 disordered regions span residues 956–1087 (SKAV…ETEK), 1092–1111 (RSPS…NIVP), and 1130–1187 (DLPL…DNET). Positions 960 to 969 (SPTDSTPPST) are enriched in low complexity. The segment covering 1005–1015 (STPQISNIEST) has biased composition (polar residues). The segment covering 1038-1053 (ESSHASKSKDFRHSDS) has biased composition (basic and acidic residues). Composition is skewed to polar residues over residues 1054 to 1082 (YSEN…QISD) and 1101 to 1111 (PENNSSHNIVP). A Bipartite nuclear localization signal motif is present at residues 1178 to 1212 (KKRSLEDNETEIKVSRDTWNTKNMRSLEPPRSKKR). Positions 1338 to 1476 (NNYYITQLDI…DILGLEIKYQ (139 aa)) constitute a Reverse transcriptase Ty1/copia-type domain. Mg(2+)-binding residues include D1346, D1427, D1428, D1610, E1652, and D1685. The RNase H Ty1/copia-type domain maps to 1610 to 1752 (DASYGNQPYY…IKTFKLLTNK (143 aa)).

As to quaternary structure, the capsid protein forms a homotrimer, from which the VLPs are assembled. The protease is a homodimer, whose active site consists of two apposed aspartic acid residues. Initially, virus-like particles (VLPs) are composed of the structural unprocessed proteins Gag and Gag-Pol, and also contain the host initiator methionine tRNA (tRNA(i)-Met) which serves as a primer for minus-strand DNA synthesis, and a dimer of genomic Ty RNA. Processing of the polyproteins occurs within the particle and proceeds by an ordered pathway, called maturation. First, the protease (PR) is released by autocatalytic cleavage of the Gag-Pol polyprotein yielding capsid protein p45 and a Pol-p154 precursor protein. This cleavage is a prerequisite for subsequent processing of Pol-p154 at the remaining sites to release the mature structural and catalytic proteins. Maturation takes place prior to the RT reaction and is required to produce transposition-competent VLPs.

Its subcellular location is the cytoplasm. It localises to the nucleus. The enzyme catalyses DNA(n) + a 2'-deoxyribonucleoside 5'-triphosphate = DNA(n+1) + diphosphate. The catalysed reaction is Endonucleolytic cleavage to 5'-phosphomonoester.. Capsid protein (CA) is the structural component of the virus-like particle (VLP), forming the shell that encapsulates the retrotransposons dimeric RNA genome. The particles are assembled from trimer-clustered units and there are holes in the capsid shells that allow for the diffusion of macromolecules. CA also has nucleocapsid-like chaperone activity, promoting primer tRNA(i)-Met annealing to the multipartite primer-binding site (PBS), dimerization of Ty1 RNA and initiation of reverse transcription. In terms of biological role, the aspartyl protease (PR) mediates the proteolytic cleavages of the Gag and Gag-Pol polyproteins after assembly of the VLP. Its function is as follows. Reverse transcriptase/ribonuclease H (RT) is a multifunctional enzyme that catalyzes the conversion of the retro-elements RNA genome into dsDNA within the VLP. The enzyme displays a DNA polymerase activity that can copy either DNA or RNA templates, and a ribonuclease H (RNase H) activity that cleaves the RNA strand of RNA-DNA heteroduplexes during plus-strand synthesis and hydrolyzes RNA primers. The conversion leads to a linear dsDNA copy of the retrotransposon that includes long terminal repeats (LTRs) at both ends. Functionally, integrase (IN) targets the VLP to the nucleus, where a subparticle preintegration complex (PIC) containing at least integrase and the newly synthesized dsDNA copy of the retrotransposon must transit the nuclear membrane. Once in the nucleus, integrase performs the integration of the dsDNA into the host genome. In Saccharomyces cerevisiae (strain ATCC 204508 / S288c) (Baker's yeast), this protein is Transposon Ty1-PR1 Gag-Pol polyprotein (TY1B-PR1).